The sequence spans 179 residues: Large ribosomal subunit protein uL5 (179 aa).

This sequence belongs to the universal ribosomal protein uL5 family. Part of the 50S ribosomal subunit; part of the 5S rRNA/L5/L18/L25 subcomplex. Contacts the 5S rRNA and the P site tRNA. Forms a bridge to the 30S subunit in the 70S ribosome.

Functionally, this is one of the proteins that bind and probably mediate the attachment of the 5S RNA into the large ribosomal subunit, where it forms part of the central protuberance. In the 70S ribosome it contacts protein S13 of the 30S subunit (bridge B1b), connecting the 2 subunits; this bridge is implicated in subunit movement. Contacts the P site tRNA; the 5S rRNA and some of its associated proteins might help stabilize positioning of ribosome-bound tRNAs. The polypeptide is Large ribosomal subunit protein uL5 (Desulfitobacterium hafniense (strain Y51)).